Reading from the N-terminus, the 43-residue chain is Large ribosomal subunit protein uL5 (43 aa).

This sequence belongs to the universal ribosomal protein uL5 family. In terms of assembly, part of the 50S ribosomal subunit; part of the 5S rRNA/L5/L18/L25 subcomplex. Contacts the 5S rRNA and the P site tRNA. Forms a bridge to the 30S subunit in the 70S ribosome.

Its function is as follows. This is one of the proteins that bind and probably mediate the attachment of the 5S RNA into the large ribosomal subunit, where it forms part of the central protuberance. In the 70S ribosome it contacts protein S13 of the 30S subunit (bridge B1b), connecting the 2 subunits; this bridge is implicated in subunit movement. Contacts the P site tRNA; the 5S rRNA and some of its associated proteins might help stabilize positioning of ribosome-bound tRNAs. The polypeptide is Large ribosomal subunit protein uL5 (rplE) (Proteus vulgaris).